Here is a 408-residue protein sequence, read N- to C-terminus: Protein CNPPD1 (408 aa).

A helical transmembrane segment spans residues 233 to 253; the sequence is CLLAVAYVSSVALAVASMAVI.

The protein belongs to the CNPPD1 family.

It localises to the membrane. This is Protein CNPPD1 (Cnppd1) from Rattus norvegicus (Rat).